The sequence spans 72 residues: DNA-directed RNA polymerase subunit Rpo10 (72 aa).

Residues Cys-7, Cys-10, Cys-54, and Cys-55 each contribute to the Zn(2+) site.

This sequence belongs to the archaeal Rpo10/eukaryotic RPB10 RNA polymerase subunit family. As to quaternary structure, part of the RNA polymerase complex. Requires Zn(2+) as cofactor.

The protein localises to the cytoplasm. The catalysed reaction is RNA(n) + a ribonucleoside 5'-triphosphate = RNA(n+1) + diphosphate. Functionally, DNA-dependent RNA polymerase (RNAP) catalyzes the transcription of DNA into RNA using the four ribonucleoside triphosphates as substrates. This Picrophilus torridus (strain ATCC 700027 / DSM 9790 / JCM 10055 / NBRC 100828 / KAW 2/3) protein is DNA-directed RNA polymerase subunit Rpo10.